A 353-amino-acid chain; its full sequence is Diacetylchitobiose uptake system permease protein NgcF (353 aa).

The tract at residues 1–24 (MKDTIPTAETASRRPEPAARGGRP) is disordered. 6 consecutive transmembrane segments (helical) span residues 36-56 (FFLA…LIPF), 100-120 (LLAA…AVAI), 141-161 (IISF…WAQM), 197-217 (VMFV…IAAI), 254-274 (AYIY…AMVP), and 303-323 (TAMG…VFLV). One can recognise an ABC transmembrane type-1 domain in the interval 95–320 (LRNVALLAAF…AVTLVFAALV (226 aa)). The segment at 329 to 353 (GGEGESKRKAPGSRARRAAAKGGAR) is disordered. Basic residues predominate over residues 337–353 (KAPGSRARRAAAKGGAR).

Belongs to the binding-protein-dependent transport system permease family. As to quaternary structure, the complex is composed of two ATP-binding proteins (MsiK), two transmembrane proteins (NgcF and NgcG) and a solute-binding protein (NgcE).

It is found in the cell membrane. Part of the ABC transporter complex NgcEFG-MsiK involved in N,N'-diacetylchitobiose ((GlcNAc)2) uptake. Responsible for the translocation of the substrate across the membrane. This Streptomyces coelicolor (strain ATCC BAA-471 / A3(2) / M145) protein is Diacetylchitobiose uptake system permease protein NgcF.